A 273-amino-acid polypeptide reads, in one-letter code: Large ribosomal subunit protein uL2 (273 aa).

A disordered region spans residues 221-262 (RGTAMNPVDHPHGGGEGRNFGKHPVTPWGVQTKGKKTRHNKR). A compositionally biased stretch (basic residues) spans 253 to 262 (KGKKTRHNKR).

The protein belongs to the universal ribosomal protein uL2 family. Part of the 50S ribosomal subunit. Forms a bridge to the 30S subunit in the 70S ribosome.

Functionally, one of the primary rRNA binding proteins. Required for association of the 30S and 50S subunits to form the 70S ribosome, for tRNA binding and peptide bond formation. It has been suggested to have peptidyltransferase activity; this is somewhat controversial. Makes several contacts with the 16S rRNA in the 70S ribosome. This chain is Large ribosomal subunit protein uL2, found in Haemophilus influenzae (strain ATCC 51907 / DSM 11121 / KW20 / Rd).